An 873-amino-acid polypeptide reads, in one-letter code: Alanine--tRNA ligase (873 aa).

Zn(2+) contacts are provided by histidine 562, histidine 566, cysteine 664, and histidine 668.

It belongs to the class-II aminoacyl-tRNA synthetase family. Requires Zn(2+) as cofactor.

The protein localises to the cytoplasm. It catalyses the reaction tRNA(Ala) + L-alanine + ATP = L-alanyl-tRNA(Ala) + AMP + diphosphate. Catalyzes the attachment of alanine to tRNA(Ala) in a two-step reaction: alanine is first activated by ATP to form Ala-AMP and then transferred to the acceptor end of tRNA(Ala). Also edits incorrectly charged Ser-tRNA(Ala) and Gly-tRNA(Ala) via its editing domain. The protein is Alanine--tRNA ligase of Shewanella amazonensis (strain ATCC BAA-1098 / SB2B).